A 279-amino-acid chain; its full sequence is Four and a half LIM domains protein 2 (279 aa).

The segment at 7-31 (CHHCNESLFGKKYILREESPYCVVC) adopts a C4-type zinc-finger fold. 3 consecutive LIM zinc-binding domains span residues 40–92 (CEEC…CTDC), 101–153 (CQEC…CVPC), and 162–212 (CVQC…CLNC). Residue Lys-78 forms a Glycyl lysine isopeptide (Lys-Gly) (interchain with G-Cter in SUMO2) linkage. Glycyl lysine isopeptide (Lys-Gly) (interchain with G-Cter in SUMO2) cross-links involve residues Lys-167 and Lys-220. An LIM zinc-binding 4 domain is found at 221-275 (CAGCTNPISGLGGTKYISFEERQWHNDCFNCKKCSLSLVGRGFLTERDDILCPDC). Ser-238 carries the phosphoserine modification.

Interacts with ZNF638 and TTN/titin. Interacts with E4F1. Interacts with GRB7. Interacts with SIRT1 and FOXO1. Interacts with CEFIP. Interacts with calcineurin. Interacts with FOXK1. As to expression, expressed in skeletal muscle and heart.

The protein resides in the cytoplasm. The protein localises to the nucleus. It is found in the myofibril. Its subcellular location is the sarcomere. It localises to the z line. May function as a molecular transmitter linking various signaling pathways to transcriptional regulation. Negatively regulates the transcriptional repressor E4F1 and may function in cell growth. Inhibits the transcriptional activity of FOXO1 and its apoptotic function by enhancing the interaction of FOXO1 with SIRT1 and FOXO1 deacetylation. Negatively regulates the calcineurin/NFAT signaling pathway in cardiomyocytes. This Homo sapiens (Human) protein is Four and a half LIM domains protein 2 (FHL2).